Reading from the N-terminus, the 721-residue chain is Phosphomethylpyrimidine synthase (721 aa).

Residues N256, M285, Y314, H350, 370-372 (SRG), 411-414 (DGMR), and E450 each bind substrate. Residue H454 participates in Zn(2+) binding. Y477 provides a ligand contact to substrate. A Zn(2+)-binding site is contributed by H518. C598, C601, and C606 together coordinate [4Fe-4S] cluster.

Belongs to the ThiC family. As to quaternary structure, homodimer. It depends on [4Fe-4S] cluster as a cofactor.

The enzyme catalyses 5-amino-1-(5-phospho-beta-D-ribosyl)imidazole + S-adenosyl-L-methionine = 4-amino-2-methyl-5-(phosphooxymethyl)pyrimidine + CO + 5'-deoxyadenosine + formate + L-methionine + 3 H(+). It participates in cofactor biosynthesis; thiamine diphosphate biosynthesis. Catalyzes the synthesis of the hydroxymethylpyrimidine phosphate (HMP-P) moiety of thiamine from aminoimidazole ribotide (AIR) in a radical S-adenosyl-L-methionine (SAM)-dependent reaction. The sequence is that of Phosphomethylpyrimidine synthase from Shewanella oneidensis (strain ATCC 700550 / JCM 31522 / CIP 106686 / LMG 19005 / NCIMB 14063 / MR-1).